Reading from the N-terminus, the 401-residue chain is Nicotinate phosphoribosyltransferase (401 aa).

A Phosphohistidine; by autocatalysis modification is found at histidine 221.

The protein belongs to the NAPRTase family. Post-translationally, transiently phosphorylated on a His residue during the reaction cycle. Phosphorylation strongly increases the affinity for substrates and increases the rate of nicotinate D-ribonucleotide production. Dephosphorylation regenerates the low-affinity form of the enzyme, leading to product release.

The enzyme catalyses nicotinate + 5-phospho-alpha-D-ribose 1-diphosphate + ATP + H2O = nicotinate beta-D-ribonucleotide + ADP + phosphate + diphosphate. It functions in the pathway cofactor biosynthesis; NAD(+) biosynthesis; nicotinate D-ribonucleotide from nicotinate: step 1/1. Functionally, catalyzes the synthesis of beta-nicotinate D-ribonucleotide from nicotinate and 5-phospho-D-ribose 1-phosphate at the expense of ATP. This is Nicotinate phosphoribosyltransferase from Pectobacterium carotovorum subsp. carotovorum (strain PC1).